Consider the following 428-residue polypeptide: Spliceosome RNA helicase DDX39B (428 aa).

Acidic residues predominate over residues 1-19 (MAENDVDNELLDYEDDEVE). Positions 1-31 (MAENDVDNELLDYEDDEVETAAGGDGAEAPA) are disordered. Ala2 carries the post-translational modification N-acetylalanine. N6-acetyllysine; alternate is present on Lys36. Lys36 participates in a covalent cross-link: Glycyl lysine isopeptide (Lys-Gly) (interchain with G-Cter in SUMO2); alternate. 2 positions are modified to phosphoserine: Ser38 and Ser41. Positions 45–73 (SGFRDFLLKPELLRAIVDCGFEHPSEVQH) match the Q motif motif. Residues 76 to 249 (IPQAILGMDV…RKFMQDPMEI (174 aa)) form the Helicase ATP-binding domain. Residue 89–96 (AKSGMGKT) participates in ATP binding. The residue at position 172 (Thr172) is a Phosphothreonine. The DECD box motif lies at 196–199 (DECD). One can recognise a Helicase C-terminal domain in the interval 261-422 (GLQQYYVKLK…ELPDEIDISS (162 aa)).

Belongs to the DEAD box helicase family. DECD subfamily. In terms of assembly, homodimer, and heterodimer with DDX39A. DDX39B interacts with the THO subcomplex to form the THO-DDX39B complex which multimerizes into a 28-subunit tetrameric assembly. Component of the transcription/export (TREX) complex at least composed of ALYREF/THOC4, DDX39B, SARNP/CIP29, CHTOP and the THO subcomplex; in the complex interacts with THOC2. THOC1-THOC2-THOC3-DDX39B subcomplex is sufficient for the interaction with export factor NXF1-NXT1. TREX seems to have a dynamic structure involving ATP-dependent remodeling. Within the TREX complex bridges ALYREF/THOC4 and the THO subcomplex, and, in a ATP-dependent manner, ALYREF/THOC4 and SARNP/CIP29. Component of the spliceosome. Interacts directly with U2AF2. Interacts with RBM8A, RNPS1 and SRRM1, FYTTD1/UIF, THOC1, MX1 and POLDIP3. Interacts with LUZP4. Interacts with SARNP/CIP29 (via the C-terminal domain); the interaction is direct and facilitates RNA binding of DDX39B. (Microbial infection) Interacts with human cytomegalovirus/HHV-5 protein UL69.

It is found in the nucleus. The protein resides in the nucleus speckle. Its subcellular location is the cytoplasm. The enzyme catalyses ATP + H2O = ADP + phosphate + H(+). Involved in nuclear export of spliced and unspliced mRNA. Component of the TREX complex which is thought to couple mRNA transcription, processing and nuclear export, and specifically associates with spliced mRNA and not with unspliced pre-mRNA. The TREX complex is recruited to spliced mRNAs by a transcription-independent mechanism, binds to mRNA upstream of the exon-junction complex (EJC) and is recruited in a splicing- and cap-dependent manner to a region near the 5' end of the mRNA where it functions in mRNA export to the cytoplasm via the TAP/NXF1 pathway. The THOC1-THOC2-THOC3 core complex alone is sufficient to promote ATPase activity of DDX39B; in the complex THOC2 is the only component that directly interacts with DDX39B. Associates with SARNP/CIP29, which facilitates RNA binding of DDX39B and likely plays a role in mRNA export. May undergo several rounds of ATP hydrolysis during assembly of TREX to drive subsequent loading of components such as ALYREF/THOC4 and CHTOP onto mRNA. Also associates with pre-mRNA independent of ALYREF/THOC4. Involved in the nuclear export of intronless mRNA; the ATP-bound form is proposed to recruit export adapter ALYREF/THOC4 to intronless mRNA; its ATPase activity is cooperatively stimulated by RNA and ALYREF/THOC4 and ATP hydrolysis is thought to trigger the dissociation from RNA to allow the association of ALYREF/THOC4 and the NXF1-NXT1 heterodimer. Involved in transcription elongation and genome stability. Its function is as follows. Splice factor that is required for the first ATP-dependent step in spliceosome assembly and for the interaction of U2 snRNP with the branchpoint. Has both RNA-stimulated ATP binding/hydrolysis activity and ATP-dependent RNA unwinding activity. Even with the stimulation of RNA, the ATPase activity is weak. Can only hydrolyze ATP but not other NTPs. The RNA stimulation of ATPase activity does not have a strong preference for the sequence and length of the RNA. However, ssRNA stimulates the ATPase activity much more strongly than dsRNA. Can unwind 5' or 3' overhangs or blunt end RNA duplexes in vitro. The ATPase and helicase activities are not influenced by U2AF2; the effect of ALYREF/THOC4 is reported conflictingly with [PubMed:23299939] reporting a stimulatory effect. In terms of biological role, (Microbial infection) The TREX complex is essential for the export of Kaposi's sarcoma-associated herpesvirus (KSHV) intronless mRNAs and infectious virus production. In Homo sapiens (Human), this protein is Spliceosome RNA helicase DDX39B.